A 122-amino-acid polypeptide reads, in one-letter code: Large ribosomal subunit protein uL14c (122 aa).

The protein belongs to the universal ribosomal protein uL14 family. Part of the 50S ribosomal subunit.

Its subcellular location is the plastid. It localises to the chloroplast. Binds to 23S rRNA. In Adiantum capillus-veneris (Maidenhair fern), this protein is Large ribosomal subunit protein uL14c.